We begin with the raw amino-acid sequence, 101 residues long: MSNATVDDMDENLVGPVIRAGDLADAVIDAVIADNPGKEVHVIERGDYVRIHTDRDCRLTRASIEQALGRSFVLAAIEAEMSSFKGRMSSSDSEMRWYYKS.

This sequence belongs to the TmoD/XamoD family. In terms of assembly, monomer. The alkene monooxygenase multicomponent enzyme system is composed of an electron transfer component and a monooxygenase component interacting with the effector protein XamoD. The electron transfer component is composed of a ferredoxin reductase (XamoF) and a ferredoxin (XamoC), and the monooxygenase component is formed by a heterohexamer (dimer of heterotrimers) of two alpha subunits (XamoA), two beta subunits (XamoE) and two gamma subunits (XamoB).

It is found in the cytoplasm. Its function is as follows. Effector component of the alkene monooxygenase multicomponent enzyme system which catalyzes the O2- and NADH-dependent epoxidation of short chain (C2 to C6) alkenes to their corresponding epoxides. One possible role of this small protein might be to facilitate electron transfer between the reductase and ferredoxin components. This is Alkene monooxygenase system, effector subunit from Xanthobacter autotrophicus (strain ATCC BAA-1158 / Py2).